A 394-amino-acid chain; its full sequence is Elongation factor Tu (394 aa).

One can recognise a tr-type G domain in the interval 10-204; that stretch reads KPHINIGTIG…AVDDNIPTPE (195 aa). The tract at residues 19-26 is G1; it reads GHVDHGKT. Residue 19–26 participates in GTP binding; that stretch reads GHVDHGKT. T26 provides a ligand contact to Mg(2+). The G2 stretch occupies residues 60–64; that stretch reads GITIN. The tract at residues 81–84 is G3; it reads DCPG. GTP contacts are provided by residues 81 to 85 and 136 to 139; these read DCPGH and NKVD. A G4 region spans residues 136-139; the sequence is NKVD. The G5 stretch occupies residues 174 to 176; sequence SAL.

The protein belongs to the TRAFAC class translation factor GTPase superfamily. Classic translation factor GTPase family. EF-Tu/EF-1A subfamily. As to quaternary structure, monomer.

It localises to the cytoplasm. The enzyme catalyses GTP + H2O = GDP + phosphate + H(+). GTP hydrolase that promotes the GTP-dependent binding of aminoacyl-tRNA to the A-site of ribosomes during protein biosynthesis. The protein is Elongation factor Tu of Chlamydia pneumoniae (Chlamydophila pneumoniae).